Consider the following 797-residue polypeptide: Sodium/hydrogen exchanger 4 (797 aa).

Topologically, residues 1 to 13 (MGPAMFMAFRLWN) are cytoplasmic. The name=A/M1 intramembrane region spans 14-28 (WLLLLAVLTRSEATS). Topologically, residues 29 to 69 (YVNESSNPTAQQAPDARFAASSSDPDEGISVFELDYDYVQI) are cytoplasmic. The interval 32–52 (ESSNPTAQQAPDARFAASSSD) is disordered. The segment at residues 70 to 90 (PYEVTLWILLASLAKIGFHLY) is an intramembrane region (name=B/M2). Topologically, residues 91–94 (HRLP) are cytoplasmic. The helical transmembrane segment at 95 to 114 (HLMPESCLLIIVGALVGGII) threads the bilayer. Over 115–127 (FGTHHKSPPVMDS) the chain is Extracellular. The helical transmembrane segment at 128–148 (SIYFLYLLPPIVLESGYFMPT) threads the bilayer. Over 149-154 (RPFFEN) the chain is Cytoplasmic. A helical transmembrane segment spans residues 155 to 175 (IGSILWWAGLGALINAFGIGL). At 176–194 (SLYFICQIKAFGLGDINLL) the chain is on the extracellular side. A helical membrane pass occupies residues 195-215 (HNLLFGSLISAVDPVAVLAVF). The Cytoplasmic portion of the chain corresponds to 216–226 (EEARVNEQLYM). A helical transmembrane segment spans residues 227–247 (MIFGEALLNDGISVVLYNILI). Over 248–270 (AFTKMHKFEDIEAVDILAGCARF) the chain is Extracellular. The helical transmembrane segment at 271-291 (VIVGCGGVFFGIIFGFISAFI) threads the bilayer. Residues 292–304 (TRFTQNISAIEPL) are Cytoplasmic-facing. A helical transmembrane segment spans residues 305-325 (IVFMFSYLSYLAAETLYLSGI). The Extracellular portion of the chain corresponds to 326–352 (LAITACAVTMKKYVEENVSQTSYTTIK). Asn342 is a glycosylation site (N-linked (GlcNAc...) asparagine). The chain crosses the membrane as a helical span at residues 353–373 (YFMKMLSSVSETLIFIFMGVS). Topologically, residues 374–384 (TIGKNHEWNWA) are cytoplasmic. Residues 385 to 405 (FICFTLLFCQIWRAISVFTLF) form a helical membrane-spanning segment. Topologically, residues 406–420 (YVSNQFRTFPFSIKD) are extracellular. An intramembrane region (name=L) is located at residues 421–441 (QFIIFYSGVRGAGSFSLAFLL). Residues 442-450 (PLSLFPRKK) are Extracellular-facing. The chain crosses the membrane as a helical span at residues 451–471 (LFVTATLVVTYFTVFFQGITI). The Cytoplasmic segment spans residues 472–797 (GPLVRYLDVR…KSHSPLLHRK (326 aa)). Acidic residues predominate over residues 759-769 (YDSGEQTEEET). The tract at residues 759-797 (YDSGEQTEEETSAILSRWTAEHRHSTEHHKSHSPLLHRK) is disordered. The segment covering 783-797 (STEHHKSHSPLLHRK) has biased composition (basic residues).

It belongs to the monovalent cation:proton antiporter 1 (CPA1) transporter (TC 2.A.36) family. As to quaternary structure, homodimer; each protomer has one site for sodium and one site for proton binding. Interacts with CHP1 and CHP2. Post-translationally, may be phosphorylated. As to expression, expressed in kidney. Expressed in uterus and endometrial epithelial cells. Expressed in the inner segments of inner medullary collecting ducts (IMCD) in kidney. Expressed in AGTR1-positive neurons in organum vasculosum of the lamina terminalis (at protein level).

Its subcellular location is the basolateral cell membrane. The protein localises to the apical cell membrane. The protein resides in the zymogen granule membrane. It carries out the reaction Na(+)(in) + H(+)(out) = Na(+)(out) + H(+)(in). It catalyses the reaction Na(+)(out) + NH4(+)(in) = Na(+)(in) + NH4(+)(out). Its activity is regulated as follows. Up-regulated in response to high extracellular sodium concentration. In terms of biological role, electroneutral antiporter that exchanges sodium for protons or ammonium ions at the basolateral membrane of epithelia to regulate cell volume and intracellular pH upon hypertonic conditions. As part of transcellular ammonia transport in renal tubules, mediates basolateral ammonium extrusion in the medullary thick ascending limb, regulating the corticopapillary ammonium gradient and overall renal acid excretion. Mediates sodium:proton exchange in gastric parietal cells secondary to cAMP-dependent acid secretion and hyperosmolarity. Possibly coupled to chloride:bicarbonate antiporter, enables loading of parietal cells with sodium and chloride ions to maintain cell volume and normal gastric acid secretion. Functions as a sodium sensor in neurons of organum vasculosum of the lamina terminalis where it regulates water intake in response to increased sodium concentration in body fluids. The sequence is that of Sodium/hydrogen exchanger 4 (Slc9a4) from Mus musculus (Mouse).